Here is a 218-residue protein sequence, read N- to C-terminus: Uracil-DNA glycosylase (218 aa).

Catalysis depends on Asp-60, which acts as the Proton acceptor.

It belongs to the uracil-DNA glycosylase (UDG) superfamily. UNG family.

Its subcellular location is the cytoplasm. The enzyme catalyses Hydrolyzes single-stranded DNA or mismatched double-stranded DNA and polynucleotides, releasing free uracil.. Functionally, excises uracil residues from the DNA which can arise as a result of misincorporation of dUMP residues by DNA polymerase or due to deamination of cytosine. This Francisella philomiragia subsp. philomiragia (strain ATCC 25017 / CCUG 19701 / FSC 153 / O#319-036) protein is Uracil-DNA glycosylase.